The primary structure comprises 432 residues: Testis-specific Y-encoded-like protein 1 (432 aa).

3 disordered regions span residues 1-31, 54-110, and 116-135; these read MSGR…PDPS, ALPP…LETA, and TDDS…LSRE. Residue lysine 160 forms a Glycyl lysine isopeptide (Lys-Gly) (interchain with G-Cter in SUMO2) linkage.

It belongs to the nucleosome assembly protein (NAP) family. Post-translationally, ubiquitinated by the CRL2(APPBP2) complex, which recognizes the Arg-Xaa-Xaa-Gly sequence at the C-terminus, leading to its degradation.

It is found in the nucleus. The protein resides in the nucleolus. In Bos taurus (Bovine), this protein is Testis-specific Y-encoded-like protein 1 (TSPYL1).